The primary structure comprises 463 residues: MAALRALRCLRGVGAPVLRPGSGIRLPSQPSRGARQWQPDIEWAEQFSGAVMYPSKETAHWKPPPWNDVDILKEKAVTNMTLNFGPQHPAAHGVLRLVLELSGEMVRKCDPHIGLLHRGTEKLIEYKTYLQALPYFDRLDYVSMMCNEQAYSIAVEKLLNIQPPPRAQWIRVLFGEITRILNHIMAVTTHALDIGAMTPFFWMFEEREKMFEFYERVSGARMHAAYIRPGGVHQDLPLGLLDDIYEFSKNFSLRIDEVEEMLTNNRIWRNRTVDIGVVTAEDALNYGFSGVMLRGSGIQWDLRKTQPYDVYDQVEFDVPIGSRGDCYDRYLCRVEEMRQSLRIIEQCLNKMPPGEIKVDDAKVSPPKRAEMKTSMESLIHHFKLYTEGYQVPPGATYTAIEAPKGEFGVYLVSDGSSRPYRCKIKAPGFAHLAGLDKMSKGHMLADVVAIIGTQDIVFGEIDR.

Residues 1–33 (MAALRALRCLRGVGAPVLRPGSGIRLPSQPSRG) constitute a mitochondrion transit peptide. At Lys62 the chain carries N6-acetyllysine. Arg118 carries the post-translational modification Symmetric dimethylarginine. Cys326, Cys332, and Cys347 together coordinate [4Fe-4S] cluster.

Belongs to the complex I 49 kDa subunit family. In terms of assembly, core subunit of respiratory chain NADH dehydrogenase (Complex I) which is composed of 45 different subunits. Component of the iron-sulfur (IP) fragment of the enzyme. Interacts with NDUFAF3. Interacts with NDUFAF7. Interacts with CERS2. The cofactor is [4Fe-4S] cluster. In terms of processing, dimethylation at Arg-118 by NDUFAF7 takes place after NDUFS2 assembles into the complex I, leading to stabilize the early intermediate complex.

The protein localises to the mitochondrion inner membrane. The enzyme catalyses a ubiquinone + NADH + 5 H(+)(in) = a ubiquinol + NAD(+) + 4 H(+)(out). Core subunit of the mitochondrial membrane respiratory chain NADH dehydrogenase (Complex I) which catalyzes electron transfer from NADH through the respiratory chain, using ubiquinone as an electron acceptor. Essential for the catalytic activity and assembly of complex I. Redox-sensitive, critical component of the oxygen-sensing pathway in the pulmonary vasculature which plays a key role in acute pulmonary oxygen-sensing and hypoxic pulmonary vasoconstriction. Plays an important role in carotid body sensing of hypoxia. Essential for glia-like neural stem and progenitor cell proliferation, differentiation and subsequent oligodendrocyte or neuronal maturation. This chain is NADH dehydrogenase [ubiquinone] iron-sulfur protein 2, mitochondrial (Ndufs2), found in Mus musculus (Mouse).